We begin with the raw amino-acid sequence, 511 residues long: MSNKLAALIILDGFGLRDETVGNAVAQAKKPNFDRYWNKYPHQTLTASGEAVGLPDGQMGNSEVGHLNIGAGRIVYQSLTRVNVAIREGEFEQNETFLAAMKHVKEKGTNLHLFGLLSDGGVHSHIHHLYALLKLAKKEGVENVYIHGFLDGRDVGPQTAEKYIKELQDQIEEIGVGEIATLSGRYYSMDRDKRWDRVEKAYRAMAYGEGPKYQNPLDVVKDSYENGIYDEFVIPSVITKENGEPVATIKDNDAVIFYNFRPDRAIQISNTFTNDDFRDFDRGDKHPKNLHFVCLTHFSETVDGYVAFKPVNLDNTVGEVLSQNGLKQLRIAETEKYPHVTFFMSGGREEKFPGEERILIDSPKVATYDLKPEMSAYEVKDALVKEIEAEKHNAIILNFANPDMVGHSGKVEPTVKAIEAVDECLGEVVDAILAKGGYAIITADHGNADVLITEEGKPHTAHTTNPVPVIVTKEGVTLREGGILGDLAPTLLDLLGVEKPKEMTGSSLIQK.

Aspartate 12 serves as a coordination point for Mn(2+). The residue at position 36 (tyrosine 36) is a Phosphotyrosine. Position 62 (serine 62) interacts with Mn(2+). The active-site Phosphoserine intermediate is serine 62. Substrate is bound by residues histidine 123, 153-154, arginine 185, arginine 191, 261-264, and lysine 336; these read RD and RPDR. Mn(2+) contacts are provided by aspartate 403, histidine 407, aspartate 444, histidine 445, and histidine 462.

The protein belongs to the BPG-independent phosphoglycerate mutase family. In terms of assembly, monomer. The cofactor is Mn(2+).

It catalyses the reaction (2R)-2-phosphoglycerate = (2R)-3-phosphoglycerate. The protein operates within carbohydrate degradation; glycolysis; pyruvate from D-glyceraldehyde 3-phosphate: step 3/5. Essential for rapid growth and for sporulation. Catalyzes the interconversion of 2-phosphoglycerate and 3-phosphoglycerate. The polypeptide is 2,3-bisphosphoglycerate-independent phosphoglycerate mutase (Bacillus licheniformis (strain ATCC 14580 / DSM 13 / JCM 2505 / CCUG 7422 / NBRC 12200 / NCIMB 9375 / NCTC 10341 / NRRL NRS-1264 / Gibson 46)).